Here is a 188-residue protein sequence, read N- to C-terminus: Peptidyl-tRNA hydrolase (188 aa).

TRNA is bound at residue Tyr14. The active-site Proton acceptor is the His19. Residues Tyr64, Asn66, and Asn112 each contribute to the tRNA site.

The protein belongs to the PTH family. As to quaternary structure, monomer.

It is found in the cytoplasm. The enzyme catalyses an N-acyl-L-alpha-aminoacyl-tRNA + H2O = an N-acyl-L-amino acid + a tRNA + H(+). Hydrolyzes ribosome-free peptidyl-tRNAs (with 1 or more amino acids incorporated), which drop off the ribosome during protein synthesis, or as a result of ribosome stalling. Functionally, catalyzes the release of premature peptidyl moieties from peptidyl-tRNA molecules trapped in stalled 50S ribosomal subunits, and thus maintains levels of free tRNAs and 50S ribosomes. In Leuconostoc mesenteroides subsp. mesenteroides (strain ATCC 8293 / DSM 20343 / BCRC 11652 / CCM 1803 / JCM 6124 / NCDO 523 / NBRC 100496 / NCIMB 8023 / NCTC 12954 / NRRL B-1118 / 37Y), this protein is Peptidyl-tRNA hydrolase.